Reading from the N-terminus, the 315-residue chain is Replication factor C small subunit (315 aa).

Residue 43 to 50 coordinates ATP; it reads GSPGVGKT.

Belongs to the activator 1 small subunits family. RfcS subfamily. In terms of assembly, heteromultimer composed of small subunits (RfcS) and large subunits (RfcL).

Its function is as follows. Part of the RFC clamp loader complex which loads the PCNA sliding clamp onto DNA. The polypeptide is Replication factor C small subunit (Methanococcus maripaludis (strain C6 / ATCC BAA-1332)).